The primary structure comprises 428 residues: 26S proteasome regulatory subunit 6B homolog (428 aa).

Position 1 is an N-acetylmethionine (Met1). 213–220 contacts ATP; it reads GPPGTGKT. Lys280 is covalently cross-linked (Glycyl lysine isopeptide (Lys-Gly) (interchain with G-Cter in ubiquitin)).

It belongs to the AAA ATPase family. In terms of processing, N-acetylated by NAT3.

It localises to the cytoplasm. The protein localises to the nucleus. The 26S proteasome is involved in the ATP-dependent degradation of ubiquitinated proteins. The regulatory (or ATPase) complex confers ATP dependency and substrate specificity to the 26S complex. This is 26S proteasome regulatory subunit 6B homolog (RPT3) from Saccharomyces cerevisiae (strain ATCC 204508 / S288c) (Baker's yeast).